Here is a 395-residue protein sequence, read N- to C-terminus: Acid ceramidase (395 aa).

Positions 1–21 are cleaved as a signal peptide; sequence MLGRSRLTFVLLAAAVTCAEA. Residues cysteine 31 and cysteine 340 are joined by a disulfide bond. Residue cysteine 143 is the Nucleophile of the active site. Asparagine 173, asparagine 259, asparagine 286, and asparagine 348 each carry an N-linked (GlcNAc...) asparagine glycan. The cysteines at positions 388 and 392 are disulfide-linked.

It belongs to the acid ceramidase family. Heterodimer; disulfide-linked. The heterodimer is composed of the disulfide-linked alpha and beta chains produced by autocatalytic cleavage of the precursor. N-glycosylated. Post-translationally, proteolytically cleaved into two chains alpha and beta that remain associated via a disulfide bond. Cleavage gives rise to a conformation change that activates the enzyme. The same catalytic Cys residue mediates the autoproteolytic cleavage and subsequent hydrolysis of lipid substrates. The beta chain may undergo an additional C-terminal processing.

Its subcellular location is the lysosome. It is found in the secreted. The enzyme catalyses an N-acylsphing-4-enine + H2O = sphing-4-enine + a fatty acid. It catalyses the reaction N-dodecanoylsphing-4-enine + H2O = dodecanoate + sphing-4-enine. The catalysed reaction is N-tetradecanoylsphing-4-enine + H2O = tetradecanoate + sphing-4-enine. It carries out the reaction N-hexadecanoylsphing-4-enine + H2O = sphing-4-enine + hexadecanoate. The enzyme catalyses N-octadecanoylsphing-4-enine + H2O = sphing-4-enine + octadecanoate. It catalyses the reaction N-dodecanoyl-(4R)-hydroxysphinganine + H2O = (4R)-hydroxysphinganine + dodecanoate. The catalysed reaction is N-(dodecanoyl)-sphinganine + H2O = dodecanoate + sphinganine. It carries out the reaction N-(acetyl)-sphing-4-enine + H2O = sphing-4-enine + acetate. The enzyme catalyses N-(hexanoyl)sphing-4-enine + H2O = hexanoate + sphing-4-enine. It catalyses the reaction N-octanoylsphing-4-enine + H2O = octanoate + sphing-4-enine. The catalysed reaction is N-(9Z-octadecenoyl)-sphing-4-enine + H2O = sphing-4-enine + (9Z)-octadecenoate. It carries out the reaction N-dodecanoylethanolamine + H2O = dodecanoate + ethanolamine. It functions in the pathway lipid metabolism; sphingolipid metabolism. Functionally, lysosomal ceramidase that hydrolyzes sphingolipid ceramides into sphingosine and free fatty acids at acidic pH. Ceramides, sphingosine, and its phosphorylated form sphingosine-1-phosphate are bioactive lipids that mediate cellular signaling pathways regulating several biological processes including cell proliferation, apoptosis and differentiation. Has a higher catalytic efficiency towards C12-ceramides versus other ceramides. Also catalyzes the reverse reaction allowing the synthesis of ceramides from fatty acids and sphingosine. For the reverse synthetic reaction, the natural sphingosine D-erythro isomer is more efficiently utilized as a substrate compared to D-erythro-dihydrosphingosine and D-erythro-phytosphingosine, while the fatty acids with chain lengths of 12 or 14 carbons are the most efficiently used. Also has an N-acylethanolamine hydrolase activity. By regulating the levels of ceramides, sphingosine and sphingosine-1-phosphate in the epidermis, mediates the calcium-induced differentiation of epidermal keratinocytes. Also indirectly regulates tumor necrosis factor/TNF-induced apoptosis. By regulating the intracellular balance between ceramides and sphingosine, in adrenocortical cells, probably also acts as a regulator of steroidogenesis. This is Acid ceramidase from Heterocephalus glaber (Naked mole rat).